The sequence spans 143 residues: Sirohydrochlorin cobaltochelatase (143 aa).

His-9 functions as the Proton acceptor in the catalytic mechanism. His-9 provides a ligand contact to Co(2+). His-9 provides a ligand contact to Ni(2+). Residues Glu-45 and 70–75 (LAHGNH) each bind substrate. A Co(2+)-binding site is contributed by His-75. Residue His-75 participates in Ni(2+) binding.

The protein belongs to the CbiX family. CbiXS subfamily. In terms of assembly, homotetramer; dimer of dimers.

The catalysed reaction is Co-sirohydrochlorin + 2 H(+) = sirohydrochlorin + Co(2+). The enzyme catalyses Ni-sirohydrochlorin + 2 H(+) = sirohydrochlorin + Ni(2+). It functions in the pathway cofactor biosynthesis; adenosylcobalamin biosynthesis; cob(II)yrinate a,c-diamide from sirohydrochlorin (anaerobic route): step 1/10. In terms of biological role, catalyzes the insertion of Co(2+) into sirohydrochlorin as part of the anaerobic pathway to cobalamin biosynthesis. Involved in the biosynthesis of the unique nickel-containing tetrapyrrole coenzyme F430, the prosthetic group of methyl-coenzyme M reductase (MCR), which plays a key role in methanogenesis and anaerobic methane oxidation. Catalyzes the insertion of Ni(2+) into sirohydrochlorin to yield Ni-sirohydrochlorin. The sequence is that of Sirohydrochlorin cobaltochelatase from Methanococcus aeolicus (strain ATCC BAA-1280 / DSM 17508 / OCM 812 / Nankai-3).